A 308-amino-acid chain; its full sequence is Transaldolase (308 aa).

The active-site Schiff-base intermediate with substrate is lysine 125.

This sequence belongs to the transaldolase family. Type 1 subfamily. Homodimer.

Its subcellular location is the cytoplasm. The enzyme catalyses D-sedoheptulose 7-phosphate + D-glyceraldehyde 3-phosphate = D-erythrose 4-phosphate + beta-D-fructose 6-phosphate. It participates in carbohydrate degradation; pentose phosphate pathway; D-glyceraldehyde 3-phosphate and beta-D-fructose 6-phosphate from D-ribose 5-phosphate and D-xylulose 5-phosphate (non-oxidative stage): step 2/3. Functionally, transaldolase is important for the balance of metabolites in the pentose-phosphate pathway. The protein is Transaldolase of Pseudomonas fluorescens (strain Pf0-1).